The chain runs to 103 residues: Iron-sulfur cluster assembly protein CyaY (103 aa).

It belongs to the frataxin family.

Involved in iron-sulfur (Fe-S) cluster assembly. May act as a regulator of Fe-S biogenesis. This is Iron-sulfur cluster assembly protein CyaY from Rickettsia rickettsii (strain Iowa).